Reading from the N-terminus, the 128-residue chain is uncharacterized protein (128 aa).

2 helical membrane passes run 33–53 (LLYI…VCYV) and 61–81 (FFCW…VIIY). Residues 99–120 (DSLNQNVGESQSNEPPKYTSTF) show a composition bias toward polar residues. Positions 99–128 (DSLNQNVGESQSNEPPKYTSTFMDELDKQD) are disordered.

The protein resides in the membrane. This is an uncharacterized protein from Schizosaccharomyces pombe (strain 972 / ATCC 24843) (Fission yeast).